A 311-amino-acid chain; its full sequence is MKVAVLGAAGGIGQALALLLKTQLPAGSKLSLYDIAPVTPGVAVDLSHIPTDVEVKGFAGEDPTAALEGADVVLISAGVARKPGMDRSDLFNINAGIVRNLVEKCAATSPKALIGIITNPVNTTVAIAAEVLKKAGVYDKNRLFGVTTLDVIRSETFVAAAKGLNVADVKVNVIGGHSGVTILPLLSQIEGVSFTDEEVAALTTRIQNAGTEVVEAKAGGGSATLSMGQAACRFGLSLVRGLQGEANVVECAYVDGGSEHAEFFAQPVVLGKNGVEQVLAYGDVSAFEANARDAMLDTLKADIDLGIEFVK.

Residues 7–13 and Asp34 each bind NAD(+); that span reads GAAGGIG. The substrate site is built by Arg81 and Arg87. NAD(+)-binding positions include Asn94 and 117 to 119; that span reads ITN. Residues Asn119 and Arg153 each contribute to the substrate site. His177 serves as the catalytic Proton acceptor. Residue Met227 participates in NAD(+) binding.

Belongs to the LDH/MDH superfamily. MDH type 1 family. Homodimer.

It catalyses the reaction (S)-malate + NAD(+) = oxaloacetate + NADH + H(+). In terms of biological role, catalyzes the reversible oxidation of malate to oxaloacetate. The polypeptide is Malate dehydrogenase (Shewanella piezotolerans (strain WP3 / JCM 13877)).